The following is a 108-amino-acid chain: ATP synthase peripheral stalk subunit F6, mitochondrial (108 aa).

The transit peptide at 1-32 (MVLQRIFRLSSVLRSAVSVHLKRNIGVTAVAF) directs the protein to the mitochondrion. N6-acetyllysine is present on residues K41, K46, and K79. Residues K84, K94, and K99 each carry the N6-acetyllysine; alternate modification. An N6-succinyllysine; alternate mark is found at K84, K94, and K99. An N6-acetyllysine modification is found at K105. S108 carries the post-translational modification Phosphoserine.

It belongs to the eukaryotic ATPase subunit F6 family. In terms of assembly, component of the ATP synthase complex composed at least of ATP5F1A/subunit alpha, ATP5F1B/subunit beta, ATP5MC1/subunit c (homooctomer), MT-ATP6/subunit a, MT-ATP8/subunit 8, ATP5ME/subunit e, ATP5MF/subunit f, ATP5MG/subunit g, ATP5MK/subunit k, ATP5MJ/subunit j, ATP5F1C/subunit gamma, ATP5F1D/subunit delta, ATP5F1E/subunit epsilon, ATP5PF/subunit F6, ATP5PB/subunit b, ATP5PD/subunit d, ATP5PO/subunit OSCP. ATP synthase complex consists of a soluble F(1) head domain (subunits alpha(3) and beta(3)) - the catalytic core - and a membrane F(0) domain - the membrane proton channel (subunits c, a, 8, e, f, g, k and j). These two domains are linked by a central stalk (subunits gamma, delta, and epsilon) rotating inside the F1 region and a stationary peripheral stalk (subunits F6, b, d, and OSCP).

It localises to the mitochondrion. Its subcellular location is the mitochondrion inner membrane. In terms of biological role, subunit F6, of the mitochondrial membrane ATP synthase complex (F(1)F(0) ATP synthase or Complex V) that produces ATP from ADP in the presence of a proton gradient across the membrane which is generated by electron transport complexes of the respiratory chain. ATP synthase complex consist of a soluble F(1) head domain - the catalytic core - and a membrane F(1) domain - the membrane proton channel. These two domains are linked by a central stalk rotating inside the F(1) region and a stationary peripheral stalk. During catalysis, ATP synthesis in the catalytic domain of F(1) is coupled via a rotary mechanism of the central stalk subunits to proton translocation. In vivo, can only synthesize ATP although its ATP hydrolase activity can be activated artificially in vitro. Part of the complex F(0) domain. Part of the complex F(0) domain and the peripheric stalk, which acts as a stator to hold the catalytic alpha(3)beta(3) subcomplex and subunit a/ATP6 static relative to the rotary elements. This Mus musculus (Mouse) protein is ATP synthase peripheral stalk subunit F6, mitochondrial.